The chain runs to 219 residues: Glycosylphosphatidylinositol anchor biosynthesis protein 11 (219 aa).

Over 1–45 (MPAKKRTRKTVKKTVSFSDDTTLTTHQNREKKNVDHDRPPVYVRK) the chain is Cytoplasmic. Ser-16 is subject to Phosphoserine. The chain crosses the membrane as a helical span at residues 46–66 (TPLMTFPYHLVALLYYYVFVS). Residue Ser-67 is a topological domain, lumenal. A helical membrane pass occupies residues 68–88 (NFNTVKLLSFLIPTQVAYLVL). The Cytoplasmic segment spans residues 89–108 (QFNKCTVYGNKIIKINYSLT). A helical transmembrane segment spans residues 109-129 (IICLGVTFLLSFPTMLLTILF). At 130–135 (GAPLMD) the chain is on the lumenal side. A helical membrane pass occupies residues 136–156 (LLWETWLLSLHFAFLAYPAVY). At 157-170 (SVFNCDFKVGLWKK) the chain is on the cytoplasmic side. A helical transmembrane segment spans residues 171–191 (YFIFIVVGGWISCVVIPLDWD). Topologically, residues 192–198 (RDWQNWP) are lumenal. The helical transmembrane segment at 199-217 (IPIVVGGYLGALVGYTIGA) threads the bilayer. Topologically, residues 218–219 (YI) are cytoplasmic.

The protein belongs to the PIGF family.

Its subcellular location is the endoplasmic reticulum membrane. It functions in the pathway glycolipid biosynthesis; glycosylphosphatidylinositol-anchor biosynthesis. Acts in the GPI biosynthetic pathway between GlcNAc-PI synthesis and GPI transfer to protein. Required for the formation of complete GPI precursors CP1 and CP2. This chain is Glycosylphosphatidylinositol anchor biosynthesis protein 11 (GPI11), found in Saccharomyces cerevisiae (strain ATCC 204508 / S288c) (Baker's yeast).